A 287-amino-acid chain; its full sequence is Protein-export membrane protein SecF (287 aa).

6 helical membrane-spanning segments follow: residues 21-41 (LIAI…FNGL), 129-149 (QIYW…FIIF), 158-178 (VILA…LFGI), 182-202 (LASV…DILL), 226-246 (VTMS…TVFV), and 259-279 (VLII…LGIL).

This sequence belongs to the SecD/SecF family. SecF subfamily. As to quaternary structure, part of the protein translocation apparatus. Forms a complex with SecD.

The protein localises to the cell membrane. Its function is as follows. Involved in protein export. The chain is Protein-export membrane protein SecF from Methanothermobacter thermautotrophicus (strain ATCC 29096 / DSM 1053 / JCM 10044 / NBRC 100330 / Delta H) (Methanobacterium thermoautotrophicum).